The following is a 213-amino-acid chain: Ribosomal RNA small subunit methyltransferase G (213 aa).

S-adenosyl-L-methionine contacts are provided by residues G77, M82, 104-106, and R145; that span reads EKS.

It belongs to the methyltransferase superfamily. RNA methyltransferase RsmG family.

It localises to the cytoplasm. It carries out the reaction guanosine(527) in 16S rRNA + S-adenosyl-L-methionine = N(7)-methylguanosine(527) in 16S rRNA + S-adenosyl-L-homocysteine. Specifically methylates the N7 position of guanine in position 527 of 16S rRNA. This Pelagibacter ubique (strain HTCC1062) protein is Ribosomal RNA small subunit methyltransferase G.